We begin with the raw amino-acid sequence, 67 residues long: ATP synthase F(0) complex subunit 8 (67 aa).

The chain crosses the membrane as a helical span at residues 8–24; sequence TWFINIVSMILTLFIVF. At Lys54 the chain carries N6-acetyllysine; alternate. Lys54 is modified (N6-succinyllysine; alternate). At Lys57 the chain carries N6-acetyllysine.

Belongs to the ATPase protein 8 family. In terms of assembly, component of the ATP synthase complex composed at least of ATP5F1A/subunit alpha, ATP5F1B/subunit beta, ATP5MC1/subunit c (homooctomer), MT-ATP6/subunit a, MT-ATP8/subunit 8, ATP5ME/subunit e, ATP5MF/subunit f, ATP5MG/subunit g, ATP5MK/subunit k, ATP5MJ/subunit j, ATP5F1C/subunit gamma, ATP5F1D/subunit delta, ATP5F1E/subunit epsilon, ATP5PF/subunit F6, ATP5PB/subunit b, ATP5PD/subunit d, ATP5PO/subunit OSCP. ATP synthase complex consists of a soluble F(1) head domain (subunits alpha(3) and beta(3)) - the catalytic core - and a membrane F(0) domain - the membrane proton channel (subunits c, a, 8, e, f, g, k and j). These two domains are linked by a central stalk (subunits gamma, delta, and epsilon) rotating inside the F1 region and a stationary peripheral stalk (subunits F6, b, d, and OSCP). Interacts with PRICKLE3.

It is found in the mitochondrion membrane. Subunit 8, of the mitochondrial membrane ATP synthase complex (F(1)F(0) ATP synthase or Complex V) that produces ATP from ADP in the presence of a proton gradient across the membrane which is generated by electron transport complexes of the respiratory chain. ATP synthase complex consist of a soluble F(1) head domain - the catalytic core - and a membrane F(1) domain - the membrane proton channel. These two domains are linked by a central stalk rotating inside the F(1) region and a stationary peripheral stalk. During catalysis, ATP synthesis in the catalytic domain of F(1) is coupled via a rotary mechanism of the central stalk subunits to proton translocation. In vivo, can only synthesize ATP although its ATP hydrolase activity can be activated artificially in vitro. Part of the complex F(0) domain. The polypeptide is ATP synthase F(0) complex subunit 8 (Equus asinus (Donkey)).